Reading from the N-terminus, the 623-residue chain is 1-deoxy-D-xylulose-5-phosphate synthase (623 aa).

Thiamine diphosphate contacts are provided by residues His-80 and 121–123 (GHS). Asp-152 is a Mg(2+) binding site. Thiamine diphosphate contacts are provided by residues 153–154 (GA), Asn-181, Tyr-289, and Glu-372. Asn-181 contributes to the Mg(2+) binding site.

The protein belongs to the transketolase family. DXPS subfamily. Homodimer. It depends on Mg(2+) as a cofactor. Thiamine diphosphate serves as cofactor.

The enzyme catalyses D-glyceraldehyde 3-phosphate + pyruvate + H(+) = 1-deoxy-D-xylulose 5-phosphate + CO2. Its pathway is metabolic intermediate biosynthesis; 1-deoxy-D-xylulose 5-phosphate biosynthesis; 1-deoxy-D-xylulose 5-phosphate from D-glyceraldehyde 3-phosphate and pyruvate: step 1/1. In terms of biological role, catalyzes the acyloin condensation reaction between C atoms 2 and 3 of pyruvate and glyceraldehyde 3-phosphate to yield 1-deoxy-D-xylulose-5-phosphate (DXP). The protein is 1-deoxy-D-xylulose-5-phosphate synthase of Baumannia cicadellinicola subsp. Homalodisca coagulata.